The sequence spans 606 residues: Threonine--tRNA ligase (606 aa).

The segment at 212-503 (DHRKLGVEMK…LLEHTAGELP (292 aa)) is catalytic. Positions 304, 355, and 480 each coordinate Zn(2+).

The protein belongs to the class-II aminoacyl-tRNA synthetase family. In terms of assembly, homodimer. Requires Zn(2+) as cofactor.

Its subcellular location is the cytoplasm. It catalyses the reaction tRNA(Thr) + L-threonine + ATP = L-threonyl-tRNA(Thr) + AMP + diphosphate + H(+). Catalyzes the attachment of threonine to tRNA(Thr) in a two-step reaction: L-threonine is first activated by ATP to form Thr-AMP and then transferred to the acceptor end of tRNA(Thr). Also edits incorrectly charged L-seryl-tRNA(Thr). The chain is Threonine--tRNA ligase from Campylobacter concisus (strain 13826).